Here is a 449-residue protein sequence, read N- to C-terminus: Glutamyl-tRNA reductase (449 aa).

Residues 58-61, serine 121, 126-128, and glutamine 132 contribute to the substrate site; these read TCNR and ETQ. The active-site Nucleophile is the cysteine 59. 203–208 provides a ligand contact to NADP(+); sequence GLGEMA.

It belongs to the glutamyl-tRNA reductase family. Homodimer.

It carries out the reaction (S)-4-amino-5-oxopentanoate + tRNA(Glu) + NADP(+) = L-glutamyl-tRNA(Glu) + NADPH + H(+). Its pathway is porphyrin-containing compound metabolism; protoporphyrin-IX biosynthesis; 5-aminolevulinate from L-glutamyl-tRNA(Glu): step 1/2. Functionally, catalyzes the NADPH-dependent reduction of glutamyl-tRNA(Glu) to glutamate 1-semialdehyde (GSA). This Helicobacter pylori (strain ATCC 700392 / 26695) (Campylobacter pylori) protein is Glutamyl-tRNA reductase.